A 131-amino-acid chain; its full sequence is D-ribose pyranase (131 aa).

Residue histidine 20 is the Proton donor of the active site. Substrate is bound by residues aspartate 28, histidine 98, and 120-122 (YAN).

The protein belongs to the RbsD / FucU family. RbsD subfamily. Homodecamer.

The protein resides in the cytoplasm. The enzyme catalyses beta-D-ribopyranose = beta-D-ribofuranose. The protein operates within carbohydrate metabolism; D-ribose degradation; D-ribose 5-phosphate from beta-D-ribopyranose: step 1/2. Functionally, catalyzes the interconversion of beta-pyran and beta-furan forms of D-ribose. This is D-ribose pyranase from Bacillus cereus (strain ATCC 14579 / DSM 31 / CCUG 7414 / JCM 2152 / NBRC 15305 / NCIMB 9373 / NCTC 2599 / NRRL B-3711).